The chain runs to 215 residues: Secretory component protein psh3 (215 aa).

Residues 1–21 lie on the Cytoplasmic side of the membrane; the sequence is MAKRSIFRFADEKGLKVAARY. The helical transmembrane segment at 22–42 threads the bilayer; that stretch reads GVLMSTSFIFALLFHSSVADV. At 43–67 the chain is on the extracellular side; sequence NTLWSPGPESAFDAAETYYTLVAGS. The helical transmembrane segment at 68 to 88 threads the bilayer; sequence HFIVKYTVYTIMGLNMIFHLI. Topologically, residues 89-105 are cytoplasmic; the sequence is QATGAKGDDKLFFYSST. A helical transmembrane segment spans residues 106-126; that stretch reads LLYLTALILFIVNVAPSMLVV. At 127–147 the chain is on the extracellular side; sequence KLQNYVQFPRNMHLSVLAASH. The chain crosses the membrane as a helical span at residues 148 to 168; that stretch reads VLVEFLLAGVILIQLGYVFGY. The Cytoplasmic segment spans residues 169 to 215; the sequence is HVQSIQQREYAEDMREQELAEKAKLESESATTQSVETVSTESVSKRK. The segment at 190–215 is disordered; it reads KAKLESESATTQSVETVSTESVSKRK. Low complexity predominate over residues 196–215; that stretch reads ESATTQSVETVSTESVSKRK.

It to yeast SHR3. In terms of assembly, monomer.

It localises to the endoplasmic reticulum membrane. Involved in amino acid permease processing and required for the efficient translocation of structurally related amino acid permeases from the endoplasmic reticulum to the plasma membrane. In Schizosaccharomyces pombe (strain 972 / ATCC 24843) (Fission yeast), this protein is Secretory component protein psh3 (psh3).